The chain runs to 208 residues: Nascent polypeptide-associated complex subunit alpha (208 aa).

Basic and acidic residues predominate over residues 1–19 (MSSSRIEELPDDDVPKTTV). 2 disordered regions span residues 1 to 50 (MSSS…HSRN) and 120 to 166 (QLAA…VFDA). The span at 21 to 34 (DAADSSESEVEGAE) shows a compositional bias: acidic residues. The 66-residue stretch at 48 to 113 (SRNEKKARKA…AKIEDLNSQA (66 aa)) folds into the NAC-A/B domain. A compositionally biased stretch (low complexity) spans 120–131 (QLAAAEAAGSNE). Basic and acidic residues predominate over residues 132–154 (HAGHDHASHDHGKGKAVESADKK). Positions 155 to 164 (DEEEDDEEVF) are enriched in acidic residues. The UBA domain maps to 169 to 208 (LEAKDIELVMAQASVSRNKAIKALKENDNDIVNSIMALSV).

The protein belongs to the NAC-alpha family. In terms of assembly, part of the nascent polypeptide-associated complex (NAC), consisting of EGD2 and EGD1. NAC associates with ribosomes via EGD1.

It localises to the cytoplasm. The protein localises to the nucleus. Component of the nascent polypeptide-associated complex (NAC), a dynamic component of the ribosomal exit tunnel, protecting the emerging polypeptides from interaction with other cytoplasmic proteins to ensure appropriate nascent protein targeting. The NAC complex also promotes mitochondrial protein import by enhancing productive ribosome interactions with the outer mitochondrial membrane and blocks the inappropriate interaction of ribosomes translating non-secretory nascent polypeptides with translocation sites in the membrane of the endoplasmic reticulum. EGD2 may also be involved in transcription regulation. The protein is Nascent polypeptide-associated complex subunit alpha (EGD2) of Ajellomyces capsulatus (strain NAm1 / WU24) (Darling's disease fungus).